A 542-amino-acid polypeptide reads, in one-letter code: Putative sodium-dependent excitatory amino acid transporter glt-6 (542 aa).

At 1–15 (MKSKRRDDIVQFCRE) the chain is on the cytoplasmic side. 3 consecutive transmembrane segments (helical) span residues 16 to 36 (NTLLVMTMFSVFLGVVLGFGL), 55 to 75 (IFMQVLKMMILPLIFSSLISA), and 93 to 113 (LYYLSTAVLATILGIFLVTVI). The Extracellular portion of the chain corresponds to 114–191 (HPGDPSIKGT…IVKRSIGMTK (78 aa)). Asn175 carries an N-linked (GlcNAc...) asparagine glycan. The next 5 membrane-spanning stretches (helical) occupy residues 192-212 (GMNILGIIVFCTGFGIVISQL), 234-254 (VVTLMWFAPLGITCLICGNLL), 265-285 (VLALYVFTVCAGLILHTIITV), 303-323 (GMIQAAVTAFGTASGGATLPM), and 386-406 (TIASIGLGSVPAGLVSILLIL). Residues 505–517 (RIGSRIGSRRPSS) are compositionally biased toward low complexity. Residues 505 to 542 (RIGSRIGSRRPSSTNLHLSWRNNNIEPPYTPLPNDENV) form a disordered region. Polar residues predominate over residues 518–529 (TNLHLSWRNNNI).

It belongs to the dicarboxylate/amino acid:cation symporter (DAACS) (TC 2.A.23) family.

It is found in the membrane. In Caenorhabditis elegans, this protein is Putative sodium-dependent excitatory amino acid transporter glt-6 (glt-6).